Consider the following 289-residue polypeptide: 4-hydroxybenzoate octaprenyltransferase (289 aa).

The next 8 membrane-spanning stretches (helical) occupy residues 21–40, 95–115, 116–136, 138–158, 161–181, 213–233, 236–256, and 268–288; these read PIGT…LAAG, VLAL…TMNS, LTIA…FMKR, IPIP…MAYA, ANAL…WTIA, IIGV…QLMG, AWYY…QRLI, and FLNN…NYLL.

The protein belongs to the UbiA prenyltransferase family. Mg(2+) is required as a cofactor.

The protein localises to the cell inner membrane. The catalysed reaction is all-trans-octaprenyl diphosphate + 4-hydroxybenzoate = 4-hydroxy-3-(all-trans-octaprenyl)benzoate + diphosphate. It participates in cofactor biosynthesis; ubiquinone biosynthesis. Functionally, catalyzes the prenylation of para-hydroxybenzoate (PHB) with an all-trans polyprenyl group. Mediates the second step in the final reaction sequence of ubiquinone-8 (UQ-8) biosynthesis, which is the condensation of the polyisoprenoid side chain with PHB, generating the first membrane-bound Q intermediate 3-octaprenyl-4-hydroxybenzoate. This Aeromonas salmonicida (strain A449) protein is 4-hydroxybenzoate octaprenyltransferase.